The sequence spans 417 residues: D-galactonate dehydratase family member RspA (417 aa).

Positions 43 and 127 each coordinate substrate. The active-site Proton donor/acceptor is Tyr158. Asp223 contributes to the Mg(2+) binding site. The active-site Proton donor/acceptor is His225. Glu249 and Glu275 together coordinate Mg(2+). Residues Glu275, Arg296, His325, Asp329, and Glu352 each contribute to the substrate site.

It belongs to the mandelate racemase/muconate lactonizing enzyme family. GalD subfamily. Requires Mg(2+) as cofactor.

It carries out the reaction D-gluconate = 2-dehydro-3-deoxy-D-gluconate + H2O. In terms of biological role, has low D-gluconate dehydratase activity (in vitro), suggesting that it has no significant role in D-gluconate degradation in vivo. Has no detectable activity with a panel of 70 other acid sugars (in vitro). This is D-galactonate dehydratase family member RspA (rspA) from Pantoea ananatis (strain LMG 20103).